The primary structure comprises 113 residues: Large ribosomal subunit protein uL24 (113 aa).

The protein belongs to the universal ribosomal protein uL24 family. As to quaternary structure, part of the 50S ribosomal subunit.

In terms of biological role, one of two assembly initiator proteins, it binds directly to the 5'-end of the 23S rRNA, where it nucleates assembly of the 50S subunit. Its function is as follows. One of the proteins that surrounds the polypeptide exit tunnel on the outside of the subunit. This chain is Large ribosomal subunit protein uL24, found in Synechococcus elongatus (strain ATCC 33912 / PCC 7942 / FACHB-805) (Anacystis nidulans R2).